The following is a 654-amino-acid chain: Arrestin domain-containing protein C (654 aa).

Positions 1 to 105 (MTQRSLKINI…AKRNLMDQWL (105 aa)) constitute a C2 domain. Residues 616-647 (AKRIFLKIQQIQSERQKQQEQQEQQVVSNLEA) adopt a coiled-coil conformation.

It belongs to the arrestin family.

The polypeptide is Arrestin domain-containing protein C (adcC) (Dictyostelium discoideum (Social amoeba)).